Consider the following 335-residue polypeptide: Dihydroorotate dehydrogenase (quinone) (335 aa).

Residues 58–62 (AGADK) and Thr82 contribute to the FMN site. A substrate-binding site is contributed by Lys62. 107–111 (NRNGF) contacts substrate. 2 residues coordinate FMN: Asn135 and Asn168. Asn168 contacts substrate. Ser171 acts as the Nucleophile in catalysis. Asn173 contacts substrate. The FMN site is built by Lys213 and Gly241. Position 242–243 (242–243 (NT)) interacts with substrate. Residues Gly264, Gly293, and 314–315 (YS) each bind FMN.

Belongs to the dihydroorotate dehydrogenase family. Type 2 subfamily. In terms of assembly, monomer. The cofactor is FMN.

It is found in the cell membrane. The catalysed reaction is (S)-dihydroorotate + a quinone = orotate + a quinol. It functions in the pathway pyrimidine metabolism; UMP biosynthesis via de novo pathway; orotate from (S)-dihydroorotate (quinone route): step 1/1. Its function is as follows. Catalyzes the conversion of dihydroorotate to orotate with quinone as electron acceptor. The protein is Dihydroorotate dehydrogenase (quinone) of Actinobacillus pleuropneumoniae serotype 7 (strain AP76).